Consider the following 638-residue polypeptide: Threonine--tRNA ligase (638 aa).

The TGS domain maps to 1-61 (MPIITLPDGS…NKDSKVVIIT (61 aa)). The segment at 242-533 (DHRKLGKKHS…LIEQYEAKFP (292 aa)) is catalytic. Zn(2+) is bound by residues Cys-333, His-384, and His-510.

This sequence belongs to the class-II aminoacyl-tRNA synthetase family. In terms of assembly, homodimer. The cofactor is Zn(2+).

It localises to the cytoplasm. It catalyses the reaction tRNA(Thr) + L-threonine + ATP = L-threonyl-tRNA(Thr) + AMP + diphosphate + H(+). Its function is as follows. Catalyzes the attachment of threonine to tRNA(Thr) in a two-step reaction: L-threonine is first activated by ATP to form Thr-AMP and then transferred to the acceptor end of tRNA(Thr). Also edits incorrectly charged L-seryl-tRNA(Thr). This chain is Threonine--tRNA ligase, found in Prochlorococcus marinus (strain MIT 9301).